The chain runs to 84 residues: Beta-cardiotoxin CTX23 (84 aa).

Residues 1-21 (MKTLLLTLVVVTIVCLDLGYT) form the signal peptide. Intrachain disulfides connect Cys-24-Cys-43, Cys-36-Cys-61, Cys-65-Cys-76, and Cys-77-Cys-82.

The protein belongs to the three-finger toxin family. Short-chain subfamily. Aminergic toxin sub-subfamily. In terms of tissue distribution, expressed by the venom gland.

It is found in the secreted. In terms of biological role, acts as a beta-blocker by binding to beta-1 and beta-2 adrenergic receptors (ADRB1 and ADRB2). It dose-dependently decreases the heart rate (bradycardia), whereas conventional cardiotoxins increases it. At 100 mg/kg, intraperitoneal injection into mice provokes labored breathing, impaired locomotion, lack of response to external stimuli, and death (after 30 minutes). This chain is Beta-cardiotoxin CTX23, found in Ophiophagus hannah (King cobra).